The following is a 130-amino-acid chain: Small ribosomal subunit protein uS9 (130 aa).

Belongs to the universal ribosomal protein uS9 family.

This Vibrio campbellii (strain ATCC BAA-1116) protein is Small ribosomal subunit protein uS9.